We begin with the raw amino-acid sequence, 1886 residues long: Highly reducing polyketide synthase (1886 aa).

Residues 11–434 enclose the Ketosynthase family 3 (KS3) domain; that stretch reads TQDVAIVGLS…GANAHAVLDD (424 aa). Residues cysteine 182, histidine 317, and histidine 357 each act as for beta-ketoacyl synthase activity in the active site. A malonyl-CoA:ACP transacylase (MAT) domain region spans residues 483 to 568; that stretch reads FLFSGQDQQS…VNNDLANTKK (86 aa). The tract at residues 616 to 750 is N-terminal hotdog fold; that stretch reads RSLIGAPQPS…GLLSIEYESS (135 aa). A PKS/mFAS DH domain is found at 616–926; it reads RSLIGAPQPS…CTAISEATNP (311 aa). Residues 618–924 form a dehydratase (DH) domain region; sequence LIGAPQPSYG…LHCTAISEAT (307 aa). Histidine 648 (proton acceptor; for dehydratase activity) is an active-site residue. Positions 778 to 926 are C-terminal hotdog fold; that stretch reads HTTQSPKALY…CTAISEATNP (149 aa). Residue aspartate 838 is the Proton donor; for dehydratase activity of the active site. Residues 1169–1480 are enoylreductase (ER) domain; that stretch reads GMLDEIYFEA…AGKHMGKVAL (312 aa). The interval 1503 to 1681 is catalytic ketoreductase (KRc) domain; it reads ATYVLVGGFG…VSLDLGLMRD (179 aa). One can recognise a Carrier domain in the interval 1802-1879; it reads DVTDLVLEIL…DLVDKIVAKS (78 aa). Residue serine 1839 is modified to O-(pantetheine 4'-phosphoryl)serine.

It functions in the pathway mycotoxin biosynthesis. In terms of biological role, highly reducing polyketide synthase; part of the gene cluster that mediates the biosynthesis of the selective antifungal agent ascochitine, an o-quinone methide that plays a possible protective role against other microbial competitors in nature and is considered to be important for pathogenicity of legume-associated Didymella species. The pathway probably begins with the synthesis of a keto-aldehyde intermediate by the ascochitine non-reducing polyketide synthase pksAC from successive condensations of 4 malonyl-CoA units, presumably with a simple acetyl-CoA starter unit. Release of the keto-aldehyde intermediate is consistent with the presence of the C-terminal reductive release domain. The HR-PKS (orf7) probably makes a diketide starter unit which is passed to the non-reducing polyketide synthase pksAC for further extension, producing ascochital and ascochitine. The aldehyde dehydrogenase (orf1), the 2-oxoglutarate-dependent dioxygenase (orf3) and the dehydrogenase (orf9) are probably involved in subsequent oxidations of methyl groups to the carboxylic acid of the heterocyclic ring. The ascochitine gene cluster also includes a gene encoding a short peptide with a cupin domain (orf2) that is often found in secondary metabolite gene clusters and which function has still to be determined. In Didymella fabae (Leaf and pod spot disease fungus), this protein is Highly reducing polyketide synthase.